The sequence spans 1062 residues: Zinc finger protein swm (1062 aa).

A PWI domain is found at 7–75 (DKLKDWLSVV…ERLFDAIASE (69 aa)). 2 disordered regions span residues 119-145 (ADSP…QASQ) and 171-340 (KPAF…PDRV). Positions 134-145 (DSNQVKLEQASQ) are enriched in polar residues. Basic and acidic residues predominate over residues 172–182 (PAFDHKTKDSH). Residues 197–207 (SASPPGRSSGV) are compositionally biased toward low complexity. Positions 208-220 (SGSGGGGPGGAGL) are enriched in gly residues. Residues 234–249 (SRRRRASLRSRSRSRS) show a composition bias toward basic residues. 2 stretches are compositionally biased toward basic and acidic residues: residues 264–273 (RRVNEREKTQ) and 294–310 (RNFD…DRPR). Residues 322–340 (RSMSPERNARRNQNSPDRV) show a composition bias toward polar residues. The C3H1-type zinc-finger motif lies at 363-391 (SHPRQRCRDFDEKGYCVRGETCPWDHGVN). The segment at 416-463 (EIWARSGGPPPGAGQGPVPPPTQPGQTTINPFSGNVRPTTLMSGSGPS) is disordered. A compositionally biased stretch (pro residues) spans 423–438 (GPPPGAGQGPVPPPTQ). A compositionally biased stretch (polar residues) spans 444–461 (INPFSGNVRPTTLMSGSG). The 75-residue stretch at 561–635 (SSLELRKVPR…RFIKVFWHND (75 aa)) folds into the RRM domain. Disordered stretches follow at residues 666-704 (NVPA…QANT), 716-741 (TTTA…LNPA), 822-847 (QDQL…KEQQ), 886-920 (SAAN…PTRV), and 1004-1062 (APVE…SWRR). The segment covering 721 to 733 (GSAGGAAGAGAPG) has biased composition (gly residues). A compositionally biased stretch (low complexity) spans 823–840 (DQLQAQMQQQQQQQQPPV). A compositionally biased stretch (polar residues) spans 1018–1037 (SLENPKQLIQSVSESESLLG). The segment covering 1046-1056 (LEDEEEDEESE) has biased composition (acidic residues).

The protein localises to the nucleus. Negatively regulates Hedgehog (hh) protein signal in wing development. Regulates neural-specific glycosylation by binding to FucTA mRNA and facilitating its nuclear export in neural cells. The protein is Zinc finger protein swm of Drosophila melanogaster (Fruit fly).